A 385-amino-acid chain; its full sequence is MSWQQRVDDALTARRATDTLRRRYVVSQGAGRWLVANGRQYLNFSSNDYLGLSQHPQIIRAWQQAATRFGVGSGGSGHISGYSVAHRALEEELAQWLGYPRALLFISGFAANQAVITALMKKNDRIVADRLSHASLLEAANLSPAQLRRFIHNDTQHLSRLLQSPCVGQQLVVTEGVYSMDGDSAPLAEIQHIARRHHAWLLVDDAHGIGVTGDEGRGTCCQRGVKPELLVVTFGKGFGVSGAAVLCSESVADYLLQFARHLVYSTSMPPAQAQALSASLAVIRSDEGRERREKLAALVQRFRAGVNASRFTLLNAHSAIQPLIVGDNSRALRLAEALRQQGCWATAIRPPTVPVGTARLRLTLTQAHEACDIDRLLEVLHGAGE.

Arg21 provides a ligand contact to substrate. 108-109 (GF) serves as a coordination point for pyridoxal 5'-phosphate. His133 is a substrate binding site. Ser179, His207, and Thr233 together coordinate pyridoxal 5'-phosphate. Lys236 carries the N6-(pyridoxal phosphate)lysine modification. Thr352 serves as a coordination point for substrate.

The protein belongs to the class-II pyridoxal-phosphate-dependent aminotransferase family. BioF subfamily. As to quaternary structure, homodimer. The cofactor is pyridoxal 5'-phosphate.

It carries out the reaction 6-carboxyhexanoyl-[ACP] + L-alanine + H(+) = (8S)-8-amino-7-oxononanoate + holo-[ACP] + CO2. It participates in cofactor biosynthesis; biotin biosynthesis. Its function is as follows. Catalyzes the decarboxylative condensation of pimeloyl-[acyl-carrier protein] and L-alanine to produce 8-amino-7-oxononanoate (AON), [acyl-carrier protein], and carbon dioxide. The polypeptide is 8-amino-7-oxononanoate synthase (Salmonella paratyphi C (strain RKS4594)).